The chain runs to 504 residues: Deoxyguanosinetriphosphate triphosphohydrolase (504 aa).

The region spanning 66-273 (RLTHSMEVQQ…MEAADDISYC (208 aa)) is the HD domain.

It belongs to the dGTPase family. Type 1 subfamily. Homotetramer. It depends on Mg(2+) as a cofactor.

It carries out the reaction dGTP + H2O = 2'-deoxyguanosine + triphosphate + H(+). In terms of biological role, dGTPase preferentially hydrolyzes dGTP over the other canonical NTPs. The sequence is that of Deoxyguanosinetriphosphate triphosphohydrolase from Citrobacter koseri (strain ATCC BAA-895 / CDC 4225-83 / SGSC4696).